The following is a 389-amino-acid chain: Phospho-N-acetylmuramoyl-pentapeptide-transferase (389 aa).

10 helical membrane passes run 25-45, 73-93, 97-117, 135-155, 190-210, 222-242, 258-278, 286-306, 311-331, and 366-386; these read RAVM…PWVI, TMGG…WGDL, FIWI…VDDY, FWQS…VSEA, ISYP…IVGA, GLVI…AYVM, GAGE…AFLW, VFMG…VAVI, IVLF…MLQV, and QVVV…LSTL.

Belongs to the glycosyltransferase 4 family. MraY subfamily. Requires Mg(2+) as cofactor.

The protein resides in the cell inner membrane. It catalyses the reaction UDP-N-acetyl-alpha-D-muramoyl-L-alanyl-gamma-D-glutamyl-meso-2,6-diaminopimeloyl-D-alanyl-D-alanine + di-trans,octa-cis-undecaprenyl phosphate = di-trans,octa-cis-undecaprenyl diphospho-N-acetyl-alpha-D-muramoyl-L-alanyl-D-glutamyl-meso-2,6-diaminopimeloyl-D-alanyl-D-alanine + UMP. It functions in the pathway cell wall biogenesis; peptidoglycan biosynthesis. In terms of biological role, catalyzes the initial step of the lipid cycle reactions in the biosynthesis of the cell wall peptidoglycan: transfers peptidoglycan precursor phospho-MurNAc-pentapeptide from UDP-MurNAc-pentapeptide onto the lipid carrier undecaprenyl phosphate, yielding undecaprenyl-pyrophosphoryl-MurNAc-pentapeptide, known as lipid I. This Burkholderia vietnamiensis (strain G4 / LMG 22486) (Burkholderia cepacia (strain R1808)) protein is Phospho-N-acetylmuramoyl-pentapeptide-transferase.